The following is a 485-amino-acid chain: ATP-dependent protease ATPase subunit HslU (485 aa).

ATP contacts are provided by residues Ile-22 and 64-69 (GVGKTE). The segment at 146-189 (KKTAATSAQPQDVSQASSGTTISLPSVSSTAQAEEHKAQNENDM) is disordered. The span at 149–177 (AATSAQPQDVSQASSGTTISLPSVSSTAQ) shows a compositional bias: polar residues. Residues 178-189 (AEEHKAQNENDM) are compositionally biased toward basic and acidic residues. 3 residues coordinate ATP: Asp-297, Glu-363, and Arg-435.

This sequence belongs to the ClpX chaperone family. HslU subfamily. As to quaternary structure, a double ring-shaped homohexamer of HslV is capped on each side by a ring-shaped HslU homohexamer. The assembly of the HslU/HslV complex is dependent on binding of ATP.

Its subcellular location is the cytoplasm. Functionally, ATPase subunit of a proteasome-like degradation complex; this subunit has chaperone activity. The binding of ATP and its subsequent hydrolysis by HslU are essential for unfolding of protein substrates subsequently hydrolyzed by HslV. HslU recognizes the N-terminal part of its protein substrates and unfolds these before they are guided to HslV for hydrolysis. The chain is ATP-dependent protease ATPase subunit HslU from Treponema denticola (strain ATCC 35405 / DSM 14222 / CIP 103919 / JCM 8153 / KCTC 15104).